The primary structure comprises 135 residues: Hexon-associated protein (135 aa).

A propeptide spanning residues 1–19 (RDAQAEVQMTNAGVQLAGG) is cleaved from the precursor.

Belongs to the adenoviridae pVIII family.

The protein is Hexon-associated protein (PVIII) of Homo sapiens (Human).